Consider the following 357-residue polypeptide: Peptide chain release factor 1 (357 aa).

Position 236 is an N5-methylglutamine (glutamine 236).

This sequence belongs to the prokaryotic/mitochondrial release factor family. Methylated by PrmC. Methylation increases the termination efficiency of RF1.

The protein resides in the cytoplasm. Its function is as follows. Peptide chain release factor 1 directs the termination of translation in response to the peptide chain termination codons UAG and UAA. This chain is Peptide chain release factor 1, found in Mycobacterium avium (strain 104).